We begin with the raw amino-acid sequence, 132 residues long: Small ribosomal subunit protein uS8 (132 aa).

It belongs to the universal ribosomal protein uS8 family. In terms of assembly, part of the 30S ribosomal subunit. Contacts proteins S5 and S12.

Functionally, one of the primary rRNA binding proteins, it binds directly to 16S rRNA central domain where it helps coordinate assembly of the platform of the 30S subunit. This chain is Small ribosomal subunit protein uS8, found in Shouchella clausii (strain KSM-K16) (Alkalihalobacillus clausii).